The sequence spans 338 residues: Anthranilate phosphoribosyltransferase (338 aa).

Residues Gly-81, 84-85 (GD), Thr-89, 91-94 (NIST), 109-117 (KHGNRNLSS), and Ala-121 contribute to the 5-phospho-alpha-D-ribose 1-diphosphate site. Residue Gly-81 coordinates anthranilate. Position 93 (Ser-93) interacts with Mg(2+). Asn-112 is an anthranilate binding site. Arg-167 contacts anthranilate. Residues Asp-226 and Glu-227 each coordinate Mg(2+).

Belongs to the anthranilate phosphoribosyltransferase family. Homodimer. Mg(2+) is required as a cofactor.

It carries out the reaction N-(5-phospho-beta-D-ribosyl)anthranilate + diphosphate = 5-phospho-alpha-D-ribose 1-diphosphate + anthranilate. The protein operates within amino-acid biosynthesis; L-tryptophan biosynthesis; L-tryptophan from chorismate: step 2/5. Functionally, catalyzes the transfer of the phosphoribosyl group of 5-phosphorylribose-1-pyrophosphate (PRPP) to anthranilate to yield N-(5'-phosphoribosyl)-anthranilate (PRA). The chain is Anthranilate phosphoribosyltransferase from Cereibacter sphaeroides (strain KD131 / KCTC 12085) (Rhodobacter sphaeroides).